Here is a 36-residue protein sequence, read N- to C-terminus: Dermonecrotic toxin LgSicTox-beta-LOXN1/LOXN7 (36 aa).

Belongs to the arthropod phospholipase D family. Class II subfamily. Mg(2+) serves as cofactor. Post-translationally, contains 2 disulfide bonds. Expressed by the venom gland.

It localises to the secreted. It carries out the reaction an N-(acyl)-sphingosylphosphocholine = an N-(acyl)-sphingosyl-1,3-cyclic phosphate + choline. The catalysed reaction is an N-(acyl)-sphingosylphosphoethanolamine = an N-(acyl)-sphingosyl-1,3-cyclic phosphate + ethanolamine. It catalyses the reaction a 1-acyl-sn-glycero-3-phosphocholine = a 1-acyl-sn-glycero-2,3-cyclic phosphate + choline. The enzyme catalyses a 1-acyl-sn-glycero-3-phosphoethanolamine = a 1-acyl-sn-glycero-2,3-cyclic phosphate + ethanolamine. In terms of biological role, dermonecrotic toxins cleave the phosphodiester linkage between the phosphate and headgroup of certain phospholipids (sphingolipid and lysolipid substrates), forming an alcohol (often choline) and a cyclic phosphate. This toxin acts on sphingomyelin (SM). It may also act on ceramide phosphoethanolamine (CPE), lysophosphatidylcholine (LPC) and lysophosphatidylethanolamine (LPE), but not on lysophosphatidylserine (LPS), and lysophosphatidylglycerol (LPG). It acts by transphosphatidylation, releasing exclusively cyclic phosphate products as second products. Induces dermonecrosis, hemolysis, increased vascular permeability, edema, inflammatory response, and platelet aggregation. This is Dermonecrotic toxin LgSicTox-beta-LOXN1/LOXN7 from Loxosceles gaucho (Spider).